A 193-amino-acid chain; its full sequence is Interferon lambda-3 (193 aa).

The N-terminal stretch at Met-1–Ala-19 is a signal peptide. 3 disulfides stabilise this stretch: Cys-35-Cys-132, Cys-69-Cys-166, and Cys-185-Cys-192.

It belongs to the lambda interferon family.

It localises to the secreted. Functionally, cytokine with antiviral, antitumour and immunomodulatory activities. Plays a critical role in the antiviral host defense, predominantly in the epithelial tissues. Acts as a ligand for the heterodimeric class II cytokine receptor composed of IL10RB and IFNLR1, and receptor engagement leads to the activation of the JAK/STAT signaling pathway resulting in the expression of IFN-stimulated genes (ISG), which mediate the antiviral state. Has a restricted receptor distribution and therefore restricted targets: is primarily active in epithelial cells and this cell type-selective action is because of the epithelial cell-specific expression of its receptor IFNLR1. Seems not to be essential for early virus-activated host defense in vaginal infection, but plays an important role in Toll-like receptor (TLR)-induced antiviral defense. Plays a significant role in the antiviral immune defense in the intestinal epithelium. Exerts an immunomodulatory effect by up-regulating MHC class I antigen expression. This Mus musculus (Mouse) protein is Interferon lambda-3 (Ifnl3).